Here is a 447-residue protein sequence, read N- to C-terminus: Tektin-4 (447 aa).

Coiled coils occupy residues 322-348 and 375-423; these read LRKT…DKEA and FRLL…TNSL.

It belongs to the tektin family. Microtubule inner protein component of sperm flagellar doublet microtubules. Post-translationally, ubiquitinated, leading to its degradation. Deubiquitinated by USP16, promoting its stability. Detected in testis, where it is weakly expressed in round spermatids, and strongly expressed in the flagellum of step 16 elongated spermatids (at protein level). Expressed in spermatozoa. In the sperm flagellum, localizes to the principal piece and midpiece (at protein level). Specifically expressed in testis; not detected in other tissues tested.

The protein resides in the cytoplasm. The protein localises to the cytoskeleton. It is found in the cilium axoneme. It localises to the flagellum axoneme. Microtubule inner protein (MIP) part of the dynein-decorated doublet microtubules (DMTs) in cilia and flagellar axoneme. Forms filamentous polymers in the walls of ciliary and flagellar microtubules. Contributes to normal sperm motility. The sequence is that of Tektin-4 (Tekt4) from Mus musculus (Mouse).